The following is a 147-amino-acid chain: Calcium-regulated heat stable protein 1 (147 aa).

Residues 1–12 (MSSEPPPPPQPP) show a composition bias toward pro residues. A disordered region spans residues 1–49 (MSSEPPPPPQPPTHQTSIGLLDTPRARDRSPSPLRGNVVPSPLPTRRTR). S2 is subject to N-acetylserine. Phosphoserine is present on residues S30, S32, and S41. T45 carries the phosphothreonine modification. A phosphoserine mark is found at S52 and S58. In terms of domain architecture, CSD spans 62-129 (VYKGVCKCFC…KLQAVEVVIT (68 aa)). S146 and S147 each carry phosphoserine.

In terms of assembly, homodimer. Interacts with STYX. In terms of processing, can be phosphorylated by DYRK2 (in vitro). Dephosphorylated by calcineurin in a Ca(2+) dependent manner, and probably by PP2A or PP4 serine phosphatases in cAMP- and PKC-mediated pathways. Widely expressed.

The protein resides in the cytoplasm. The protein localises to the P-body. Its subcellular location is the cytoplasmic granule. Binds mRNA and regulates the stability of target mRNA. The protein is Calcium-regulated heat stable protein 1 (Carhsp1) of Rattus norvegicus (Rat).